The sequence spans 410 residues: Replication factor C large subunit (410 aa).

ATP is bound at residue 46–53 (GDPGTGKT).

It belongs to the activator 1 small subunits family. RfcL subfamily. As to quaternary structure, heteromultimer composed of small subunits (RfcS) and large subunits (RfcL).

Part of the RFC clamp loader complex which loads the PCNA sliding clamp onto DNA. This chain is Replication factor C large subunit, found in Picrophilus torridus (strain ATCC 700027 / DSM 9790 / JCM 10055 / NBRC 100828 / KAW 2/3).